The following is a 717-amino-acid chain: MEDEPKLPTDDGPTFNESCKISSEILTAGDRKLLKVELLKEETTLVSWKKLMDEASKENGGLFVSAPERLLNANPNLEFRLAPGAQTENEMVNQPHPNRLNSVIAKIERLYMGKDGSDGEELDGAPDDDDYDTEDSFIDDAELDEYFEVDNSPIKHDGFFVNRGKLERIEPSATSNQQQPKKRRRKESAKPCGDVVDVSRKRAKMAKTAGGKDQSASPGPSSKKISNDSKTVQDSFSPLKAQNGNDSLVLENVKHTDKANHQPMNATSPKSKAAGSSGPLHPKCSSKSVHEQSNSPPGKSRPNVSAKSAVVRQQVNNGMPDLDIATESKTSIQISKKSGSNGRPKYSTLEKAIRNLEKLVAESRPPAATENQDADISSQAVKRGLPGDVKLHLAKVARIAYASQGEISGELINRLMGIVGHLIQIRSLKRNLKIMIDSIVTANREKDTRFQRIKSEITEMLKTQVPLVESQETNQEAGTSDDFQDVGSLGKSPVKKFVMDVALEEKLCDLYDVFVEGMDEHSGSQIRKLYSDLAQLWPNSLVDNHEIRRAICREKERRRALEGNIGKEMDQTKITKKKQTQLVPKSEGITYPDKTSGVEVKASVVLTATTTSLVDCQPAADSSFERSKQQHEKLKRTSSLSNPAAEGKKVRRKTEPALEETHLPAEKPLVLALKRQTHLKSKTHKQVQVHPQSKAHKQAQVHPKAKTQTPPDLNLPS.

3 disordered regions span residues 114–136 (KDGS…TEDS), 166–308 (LERI…SAKS), and 620–717 (ADSS…NLPS). The segment covering 118-136 (DGEELDGAPDDDDYDTEDS) has biased composition (acidic residues). 2 stretches are compositionally biased toward polar residues: residues 214 to 246 (QSAS…NGND) and 285 to 308 (SSKS…SAKS). Over residues 623–632 (SFERSKQQHE) the composition is skewed to basic and acidic residues. The Nuclear localization signal motif lies at 634–641 (LKRTSSLS). Residues 653-665 (KTEPALEETHLPA) are compositionally biased toward basic and acidic residues. The span at 675 to 705 (RQTHLKSKTHKQVQVHPQSKAHKQAQVHPKA) shows a compositional bias: basic residues. Residues 706 to 717 (KTQTPPDLNLPS) show a composition bias toward polar residues.

It belongs to the ubinuclein family. In terms of assembly, component of the HIRA complex made of UBN1, UBN2, ASF1A, CABIN1 and HIRA. Interacts with HIRA.

It localises to the nucleus. The protein localises to the nucleolus. In terms of biological role, may be required for replication-independent chromatin assembly. This chain is Ubinuclein-2, found in Arabidopsis thaliana (Mouse-ear cress).